The following is a 277-amino-acid chain: Phosphoenolpyruvate synthase regulatory protein (277 aa).

Residue G157 to T164 participates in ADP binding.

This sequence belongs to the pyruvate, phosphate/water dikinase regulatory protein family. PSRP subfamily.

It catalyses the reaction [pyruvate, water dikinase] + ADP = [pyruvate, water dikinase]-phosphate + AMP + H(+). It carries out the reaction [pyruvate, water dikinase]-phosphate + phosphate + H(+) = [pyruvate, water dikinase] + diphosphate. Its function is as follows. Bifunctional serine/threonine kinase and phosphorylase involved in the regulation of the phosphoenolpyruvate synthase (PEPS) by catalyzing its phosphorylation/dephosphorylation. This chain is Phosphoenolpyruvate synthase regulatory protein, found in Salmonella gallinarum (strain 287/91 / NCTC 13346).